The following is a 1164-amino-acid chain: DNA-directed RNA polymerase 132 kDa polypeptide (1164 aa).

This sequence belongs to the RNA polymerase beta chain family. As to quaternary structure, the DNA-dependent RNA polymerase used for intermediate and late genes expression consists of eight subunits (147) kDa, (133) kDa, (35) kDa, (30) kDa, (22) kDa, (19) kDa, (18) kDa and (7) kDa totalling more than 500 kDa in mass. The same holoenzyme, with the addition of the transcription-specificity factor RAP94, is used for early gene expression.

It localises to the virion. It carries out the reaction RNA(n) + a ribonucleoside 5'-triphosphate = RNA(n+1) + diphosphate. Functionally, part of the DNA-dependent RNA polymerase which catalyzes the transcription of viral DNA into RNA using the four ribonucleoside triphosphates as substrates. Responsible for the transcription of early, intermediate and late genes. DNA-dependent RNA polymerase associates with the early transcription factor (ETF), itself composed of D6 and A7, thereby allowing the early genes transcription. Late transcription, and probably also intermediate transcription, require newly synthesized RNA polymerase. This is DNA-directed RNA polymerase 132 kDa polypeptide (RPO132) from Oryctolagus cuniculus (Rabbit).